The following is a 606-amino-acid chain: Aspartate--tRNA(Asp/Asn) ligase (606 aa).

Glu196 is an L-aspartate binding site. Positions 220–223 are aspartate; that stretch reads QIFK. An L-aspartate-binding site is contributed by Arg242. Residues 242-244 and Gln251 each bind ATP; that span reads RDE. An L-aspartate-binding site is contributed by His465. An ATP-binding site is contributed by Glu499. Arg506 contributes to the L-aspartate binding site. 551-554 is a binding site for ATP; it reads GMDR.

It belongs to the class-II aminoacyl-tRNA synthetase family. Type 1 subfamily. As to quaternary structure, homodimer.

The protein resides in the cytoplasm. The catalysed reaction is tRNA(Asx) + L-aspartate + ATP = L-aspartyl-tRNA(Asx) + AMP + diphosphate. Its function is as follows. Aspartyl-tRNA synthetase with relaxed tRNA specificity since it is able to aspartylate not only its cognate tRNA(Asp) but also tRNA(Asn). Reaction proceeds in two steps: L-aspartate is first activated by ATP to form Asp-AMP and then transferred to the acceptor end of tRNA(Asp/Asn). In Oleidesulfovibrio alaskensis (strain ATCC BAA-1058 / DSM 17464 / G20) (Desulfovibrio alaskensis), this protein is Aspartate--tRNA(Asp/Asn) ligase.